The chain runs to 294 residues: NAD kinase (294 aa).

Catalysis depends on aspartate 73, which acts as the Proton acceptor. Residues 73 to 74 (DG), 147 to 148 (NE), histidine 158, arginine 175, aspartate 177, and 188 to 193 (TAYALS) each bind NAD(+).

The protein belongs to the NAD kinase family. It depends on a divalent metal cation as a cofactor.

It localises to the cytoplasm. The enzyme catalyses NAD(+) + ATP = ADP + NADP(+) + H(+). Functionally, involved in the regulation of the intracellular balance of NAD and NADP, and is a key enzyme in the biosynthesis of NADP. Catalyzes specifically the phosphorylation on 2'-hydroxyl of the adenosine moiety of NAD to yield NADP. The protein is NAD kinase of Tolumonas auensis (strain DSM 9187 / NBRC 110442 / TA 4).